We begin with the raw amino-acid sequence, 152 residues long: SKP1-like protein 12 (152 aa).

An interaction with the F-box domain of F-box proteins region spans residues 94–152 (ILAANYLNIKSLFDLTCQTVADMIKGKTPEEIRSTFNIENDFTPEEEEAVRKENQWAFE).

Belongs to the SKP1 family. Part of a SCF (SKP1-cullin-F-box) protein ligase complex. Interacts with ADO3/FKF1, COI1/FBL2, EBF1/FBL6, PP2B10, At3g61590 and At5g49610. In terms of tissue distribution, expressed in young seedlings, roots, leaves, floral stems, inflorescences, and siliques, with a slightly higher level in inflorescence than in other tissues.

It localises to the nucleus. Its pathway is protein modification; protein ubiquitination. Its function is as follows. Involved in ubiquitination and subsequent proteasomal degradation of target proteins. Together with CUL1, RBX1 and a F-box protein, it forms a SCF E3 ubiquitin ligase complex. The functional specificity of this complex depends on the type of F-box protein. In the SCF complex, it serves as an adapter that links the F-box protein to CUL1. Plays a role during early flowers reproductive development. The protein is SKP1-like protein 12 (ASK12) of Arabidopsis thaliana (Mouse-ear cress).